Here is a 204-residue protein sequence, read N- to C-terminus: 3-isopropylmalate dehydratase small subunit (204 aa).

It belongs to the LeuD family. LeuD type 1 subfamily. Heterodimer of LeuC and LeuD.

The enzyme catalyses (2R,3S)-3-isopropylmalate = (2S)-2-isopropylmalate. Its pathway is amino-acid biosynthesis; L-leucine biosynthesis; L-leucine from 3-methyl-2-oxobutanoate: step 2/4. Catalyzes the isomerization between 2-isopropylmalate and 3-isopropylmalate, via the formation of 2-isopropylmaleate. The polypeptide is 3-isopropylmalate dehydratase small subunit (Vesicomyosocius okutanii subsp. Calyptogena okutanii (strain HA)).